We begin with the raw amino-acid sequence, 928 residues long: Receptor-like kinase TMK4 (928 aa).

A signal peptide spans 1–24; it reads MEAPTPLLLLVLLTTITFFTTSVA. Residues 25 to 472 are Extracellular-facing; it reads DDQTAMLALA…GGSSGGGGSK (448 aa). Cys51 and Cys58 form a disulfide bridge. LRR repeat units lie at residues 61-84, 85-107, 108-130, 132-157, 158-180, 181-205, 207-229, 230-251, 252-276, and 278-298; these read GRVT…ISTL, SELK…FAKL, SSLQ…AFAG, TSLQ…LVDS, TSLT…IFDS, LASL…LGKS, IQNL…LSSM, TSLS…DLSK, SENL…LLTL, and SLKN…LFSP. Asn144 is a glycosylation site (N-linked (GlcNAc...) asparagine). A glycan (N-linked (GlcNAc...) asparagine) is linked at Asn193. N-linked (GlcNAc...) asparagine glycosylation is present at Asn281. 2 cysteine pairs are disulfide-bonded: Cys310–Cys318 and Cys348–Cys356. 3 LRR repeats span residues 360–383, 384–407, and 408–435; these read GKNV…AIAN, LTSL…ELTF, and MTSL…VKFS. Asn383 carries an N-linked (GlcNAc...) asparagine glycan. The disordered stretch occupies residues 445 to 465; it reads TNGGDGSSPGTGGASGGPGGS. The helical transmembrane segment at 473-493 threads the bilayer; that stretch reads VGVIVGVIVAVLVFLAILGFV. The Cytoplasmic portion of the chain corresponds to 494–928; it reads VYKFVMKRKY…PNTFDSADGR (435 aa). The region spanning 578–858 is the Protein kinase domain; the sequence is FSEDNILGRG…HAVNVLGPLV (281 aa). ATP contacts are provided by residues 584 to 592 and Lys606; that span reads LGRGGFGVV. The active-site Proton acceptor is Asp707. Polar residues-rich tracts occupy residues 898–911 and 918–928; these read FHGD…QSSI and FPNTFDSADGR. A disordered region spans residues 898–928; the sequence is FHGDFSYSQTQSSIPPKASGFPNTFDSADGR.

It belongs to the protein kinase superfamily. Ser/Thr protein kinase family. As to quaternary structure, interacts with BAK1 (via kinase domain), SERK4 and SERK5. In terms of tissue distribution, expressed in roots, leaves, stems, siliques and flowers. Ubiquitous, with a high expression in mature pollen grains and in the pericycle and the xylem vasculature of the primary and lateral roots.

The protein resides in the membrane. The enzyme catalyses L-seryl-[protein] + ATP = O-phospho-L-seryl-[protein] + ADP + H(+). It catalyses the reaction L-threonyl-[protein] + ATP = O-phospho-L-threonyl-[protein] + ADP + H(+). Functionally, involved in auxin signal transduction and cell expansion and proliferation regulation. May be involved in brassinosteroid-mediated plant growth and development via auxin regulation. May be involved in microspore and pollen development. The polypeptide is Receptor-like kinase TMK4 (Arabidopsis thaliana (Mouse-ear cress)).